We begin with the raw amino-acid sequence, 252 residues long: uncharacterized protein (252 aa).

10 consecutive repeat copies span residues 68-82 (TYNQ…DLVD), 83-97 (TYNQ…DLVD), 98-112 (TYNQ…DLVD), 113-127 (TYNQ…DLVD), 128-142 (TYNQ…DLVD), 143-157 (TYNQ…DLVD), 158-172 (TYNQ…DLID), 173-187 (TYNQ…DLVD), 188-202 (TYNQ…DLVD), and 203-217 (TYNQ…DLVD). A 13 X 15 AA tandem repeats region spans residues 68–246 (TYNQSQNVCP…LIDTYNQSQN (179 aa)). The 11; truncated repeat unit spans residues 218-230 (TYNQSQNVCPQDL). One copy of the 12; truncated repeat lies at 231–239 (NVYTQDLID). The stretch at 240–246 (TYNQSQN) is one 13; truncated repeat.

Its function is as follows. A protein probably derived from this gene is found in cuboidal crystalline inclusions, but is not toxic even when coexpressed with upstream ORF1. The protein runs anomalously as a 50 kDa band in gels. This is an uncharacterized protein from Bacillus thuringiensis subsp. kurstaki.